The primary structure comprises 792 residues: MARTHILGFPRIGERRELKFAQEAFWRGDRTEAELRDVAAQLRRRHWQLQADRGLDTVATGDFAYYDQMLSLTALLGALPRRFGLDPARLTLTQYFELARGNREQPAMEMTKWFDTNYHYLVPELDAETTFDGGPAWFFEEADEALALGLRARPVLIGPVTYLWLSKSHVAGFDRLALLPQLLQGYRRILDQLKARGIEWVQIDEPALCLDLEPAWLDAFDTAYAALREAGPKLLLATYFDTAADHAQRAAALPVDGFHIDLVRAPEQLAAWQAALPAHAVLSLGVIDGRNIWRTDLRRVLDTLRPVQAALGERLWLAPSCSLLHVPVSLAHEVRLDVELKSWLAFATEKLDELSVLGRALNQGDAVVAEALAASDAAQASRRASRRVVNPRVQQRLAAVSAGMADRASPFAERIERQRQALQLPLLPTTTIGSFPQTAAIRQTRAAFKRGEIGALEYLERIRAEIAVAVRKQEALGLDVLVHGEAERNDMVEYFGEQLCGYGFTENGWVQSYGSRCVKPPVIYGDVYRPEPMTVDTARYAQSLTERPMKGMLTGPITMLQWSFVRDDQPRATTARQLALAIRDEVCDLEQAGIRVIQIDEPALREGLPLRRADWDAYLDWAVTAFRLSASGVQDQTQIHTHMCYAEFNDILPAIAAMDADVITIETSRSAMELLEGFGDFDYPNEIGPGVYDIHSPRVPSVQAMERLLDRACEVVPPQRLWVNPDCGLKTRGWEETEAALANMVSAARALRARLSARGATTWKRLSKPAAATAAAVPHAGNACTACATHAN.

5-methyltetrahydropteroyltri-L-glutamate-binding positions include 16–19 and Lys-112; that span reads RELK. Residues 432–434 and Glu-485 contribute to the L-homocysteine site; that span reads IGS. Residues 432–434 and Glu-485 contribute to the L-methionine site; that span reads IGS. 5-methyltetrahydropteroyltri-L-glutamate contacts are provided by residues 516 to 517 and Trp-562; that span reads RC. L-homocysteine is bound at residue Asp-600. Asp-600 contributes to the L-methionine binding site. Glu-606 contacts 5-methyltetrahydropteroyltri-L-glutamate. Zn(2+) is bound by residues His-642, Cys-644, and Glu-666. Residue His-695 is the Proton donor of the active site. Cys-727 is a binding site for Zn(2+).

It belongs to the vitamin-B12 independent methionine synthase family. Requires Zn(2+) as cofactor.

The catalysed reaction is 5-methyltetrahydropteroyltri-L-glutamate + L-homocysteine = tetrahydropteroyltri-L-glutamate + L-methionine. It participates in amino-acid biosynthesis; L-methionine biosynthesis via de novo pathway; L-methionine from L-homocysteine (MetE route): step 1/1. Catalyzes the transfer of a methyl group from 5-methyltetrahydrofolate to homocysteine resulting in methionine formation. The chain is 5-methyltetrahydropteroyltriglutamate--homocysteine methyltransferase from Cupriavidus necator (strain ATCC 17699 / DSM 428 / KCTC 22496 / NCIMB 10442 / H16 / Stanier 337) (Ralstonia eutropha).